The following is a 423-amino-acid chain: MPELFTIPLALAGISHHAADIATLEAFRFPDEAAFLHEARERFRGVLLLQTCNRIEVLVQGDARSLEGFLQEKGRHGFTVIEGEAVPRHLLELAAGIDSLIVGEDQILGQLKQALAAAEEAGTCCSAIGLCIKKAVHAGVRVRRQTQINRGAVSVGSAAVTLAENLLGTLRDRHILVVGSGEMGVLVAQALAARGLTAIYVANRTYERAVMLADKIGGRAVNFKDLYRYIALSDVVISCTAAPHPVIRTEDIRAVMEERLWPLDTHPRHLILIDIAQPRDVEEGVRSIEGVHLFTIDDLRNVNDATMESRRSEADRARGIIDEEAEHFVRLLRRAAADETLALLYTWAESIRARERDRALARLRERDDRTAEVIDDLTHALTNKILSDVTTAIRACAECGDITTAEALMRAITRGEPCFQNEE.

Residues 51 to 54, S99, 104 to 106, and Q110 contribute to the substrate site; these read TCNR and EDQ. C52 (nucleophile) is an active-site residue. 179–184 is an NADP(+) binding site; that stretch reads GSGEMG.

This sequence belongs to the glutamyl-tRNA reductase family. In terms of assembly, homodimer.

The enzyme catalyses (S)-4-amino-5-oxopentanoate + tRNA(Glu) + NADP(+) = L-glutamyl-tRNA(Glu) + NADPH + H(+). It participates in porphyrin-containing compound metabolism; protoporphyrin-IX biosynthesis; 5-aminolevulinate from L-glutamyl-tRNA(Glu): step 1/2. In terms of biological role, catalyzes the NADPH-dependent reduction of glutamyl-tRNA(Glu) to glutamate 1-semialdehyde (GSA). This is Glutamyl-tRNA reductase from Methanoculleus marisnigri (strain ATCC 35101 / DSM 1498 / JR1).